A 434-amino-acid chain; its full sequence is Homogentisate 1,2-dioxygenase (434 aa).

The Proton acceptor role is filled by H289. Residues H332 and E338 each contribute to the Fe cation site. Homogentisate-binding residues include Y347 and H368. Fe cation is bound at residue H368.

This sequence belongs to the homogentisate dioxygenase family. Hexamer; dimer of trimers. It depends on Fe cation as a cofactor.

It carries out the reaction homogentisate + O2 = 4-maleylacetoacetate + H(+). The protein operates within amino-acid degradation; L-phenylalanine degradation; acetoacetate and fumarate from L-phenylalanine: step 4/6. Involved in the catabolism of homogentisate (2,5-dihydroxyphenylacetate or 2,5-OH-PhAc), a central intermediate in the degradation of phenylalanine and tyrosine. Catalyzes the oxidative ring cleavage of the aromatic ring of homogentisate to yield maleylacetoacetate. The polypeptide is Homogentisate 1,2-dioxygenase (Pseudomonas syringae pv. syringae (strain B728a)).